Consider the following 261-residue polypeptide: tRNA pseudouridine synthase A (261 aa).

D51 (nucleophile) is an active-site residue. Y109 is a substrate binding site.

The protein belongs to the tRNA pseudouridine synthase TruA family. In terms of assembly, homodimer.

It carries out the reaction uridine(38/39/40) in tRNA = pseudouridine(38/39/40) in tRNA. Its function is as follows. Formation of pseudouridine at positions 38, 39 and 40 in the anticodon stem and loop of transfer RNAs. This Shewanella pealeana (strain ATCC 700345 / ANG-SQ1) protein is tRNA pseudouridine synthase A.